A 4965-amino-acid polypeptide reads, in one-letter code: Auxin transport protein BIG (4965 aa).

The next 3 helical transmembrane spans lie at 289–309 (SDIC…IFSP), 646–666 (ACLA…AYEV), and 772–792 (LFLI…YEGL). Residues 1383–1425 (TNQESNSTVDCDASSGEEDEDDGTSDGELVSIDRDEEEDGNSE) form a disordered region. Acidic residues predominate over residues 1397–1407 (SGEEDEDDGTS). A UBR-type zinc finger spans residues 1431-1502 (KVCTFTSSGS…RGSSCQCLKP (72 aa)). A disordered region spans residues 2437–2456 (DDAPDNHAKASAASNSTTGN). The span at 2445 to 2456 (KASAASNSTTGN) shows a compositional bias: low complexity. The ZZ-type zinc-finger motif lies at 2469–2528 (SVQYCCDGCSTVPILRRRWHCNICPDFDLCETCYEILDADRLPAPHSRDHPMSAIPIELD). Zn(2+)-binding residues include Cys2474, Cys2477, Cys2489, Cys2492, Cys2498, Cys2501, His2514, and His2518. The interval 2997-3037 (NAQKTESGDIGSSTRTGSQSSDSKKKRKGDDSSEGSSEKSC) is disordered. Residues 3007-3017 (GSSTRTGSQSS) show a composition bias toward low complexity. Over residues 3024–3037 (KGDDSSEGSSEKSC) the composition is skewed to basic and acidic residues. Residues 3319 to 3359 (CPRCSRSVTDKHGICSNCHENAYQCRQCRNINYENLDSFLC) form an MYND-type; degenerate zinc finger. The tract at residues 3672–3721 (PKSDSGEKEPGMGKSSLMQAKNDDTVGHSVTNLSTSKTQSELSGKIPDGS) is disordered. Residues 3699 to 3713 (HSVTNLSTSKTQSEL) are compositionally biased toward polar residues. Positions 4433–4963 (PSIPLILSML…DFVRAIIHGA (531 aa)) are UBR4 E3 catalytic module. The HemiRING-type zinc finger occupies 4562–4681 (GLACMVCREG…WDQLNSLGRA (120 aa)). Cys4565, Cys4568, His4615, and Cys4618 together coordinate Zn(2+). Residues 4684–4963 (SRLRLLTYDI…DFVRAIIHGA (280 aa)) form the UZI domain. The segment covering 4753-4770 (SSSPSTPESPVRLSALSG) has biased composition (low complexity). Disordered stretches follow at residues 4753 to 4778 (SSSP…SGSS) and 4822 to 4846 (STLK…ADSN). A compositionally biased stretch (polar residues) spans 4824 to 4845 (LKLSADTSSSAVRSDEGSSADS).

Belongs to the UBR4 family.

The protein localises to the membrane. In terms of biological role, required for auxin efflux and polar auxin transport (PAT) influencing auxin-mediated developmental responses (e.g. cell elongation, apical dominance, lateral root production, inflorescence architecture, general growth and development). The polypeptide is Auxin transport protein BIG (Oryza sativa subsp. japonica (Rice)).